The following is a 185-amino-acid chain: Ribosome-recycling factor (185 aa).

The protein belongs to the RRF family.

Its subcellular location is the cytoplasm. Functionally, responsible for the release of ribosomes from messenger RNA at the termination of protein biosynthesis. May increase the efficiency of translation by recycling ribosomes from one round of translation to another. In Treponema denticola (strain ATCC 35405 / DSM 14222 / CIP 103919 / JCM 8153 / KCTC 15104), this protein is Ribosome-recycling factor.